We begin with the raw amino-acid sequence, 198 residues long: Na(+)-translocating NADH-quinone reductase subunit E (198 aa).

Transmembrane regions (helical) follow at residues S11 to V31, V35 to V55, F77 to F97, G110 to V130, V140 to L160, and L176 to I196.

Belongs to the NqrDE/RnfAE family. In terms of assembly, composed of six subunits; NqrA, NqrB, NqrC, NqrD, NqrE and NqrF.

The protein resides in the cell inner membrane. It carries out the reaction a ubiquinone + n Na(+)(in) + NADH + H(+) = a ubiquinol + n Na(+)(out) + NAD(+). Functionally, NQR complex catalyzes the reduction of ubiquinone-1 to ubiquinol by two successive reactions, coupled with the transport of Na(+) ions from the cytoplasm to the periplasm. NqrA to NqrE are probably involved in the second step, the conversion of ubisemiquinone to ubiquinol. The polypeptide is Na(+)-translocating NADH-quinone reductase subunit E (Mannheimia succiniciproducens (strain KCTC 0769BP / MBEL55E)).